Here is a 76-residue protein sequence, read N- to C-terminus: Nemertide alpha-1 (76 aa).

Residues 1-28 (YRIASSSIAKMKTAVFLVGLLFLGLVFA) form the signal peptide. A propeptide spanning residues 29 to 44 (DEAAIDSEFDQSIDKR) is cleaved from the precursor. Cystine bridges form between Cys46–Cys60, Cys53–Cys64, and Cys59–Cys70. Pro72 and Pro73 each carry 4-hydroxyproline.

It belongs to the nemertide family. Confined to the epidermis and to the mucus layer.

It localises to the secreted. In terms of biological role, highly potent toxin against insect sodium channel (Nav) and with less potent activity against mammalian sodium channels. Potently inhibits inactivation of insect sodium channels of B.germanica (BgNav1) (EC(50)=8.6 nM), D.melanogaster (Dm Nav1), and arachnid sodium channel V.destructor (VdNav1). Also delays the inactivation of most mammalian Nav channels tested (human Nav1.1/SCN1A; EC(50)=124.1 nM, rat Nav1.2/SCN2A; EC(50)=359.6 nM, rat Nav1.3/SCN3A; EC(50)=135.4 nM, rat Nav1.4/SCN4A; EC(50)=145.5 nM, human Nav1.5/SCN5A; EC(50)=138.3 nM, mouse Nav1.6/SCN8A; EC(50)=240.4 nM, human Nav1.9/SCN9A; EC(50)=76.5 nM). 1 uM is enough to completely inhibits the inactivation, resulting in sustained non-inactivating currents. In addition, the toxin significantly enhances the recovery from inactivation, and the open state is not required for the toxin to interact with the channel. In vivo, injection into green crabs (Carcinus maenas at 1 mug/kg) of small doses (1-5 ug/kg) results in slow and fast permanent paralysis, whereas injection of high doses (more than 10 ug/kg) causes death. Injection into juvenile Blaptica dubia cockroaches results in death or permanent paralysis at doses higher than 7.1 ug/kg. Injection into brine shrimp (Artemia salina) stops movement or causes death after 24 hours (EC(50)=0.3 uM). In the rare inherited cardiac arrhythmia Brugada syndrome 1 (BRGDA1), this toxin is able to restore the loss of function by reducing channel inactivation, without affecting activation, by binding to Nav1.5/SCN5A. The polypeptide is Nemertide alpha-1 (Lineus lacteus (Ribbon worm)).